Reading from the N-terminus, the 463-residue chain is Trigger factor (463 aa).

Residues 162 to 243 form the PPIase FKBP-type domain; sequence GDHVSIDLSA…VHSVKLKELP (82 aa). Over residues 427–444 the composition is skewed to polar residues; that stretch reads SGNTIEPPTPVHTETITV. A disordered region spans residues 427–463; that stretch reads SGNTIEPPTPVHTETITVASGDEETEESAAEQGETEK.

Belongs to the FKBP-type PPIase family. Tig subfamily.

The protein resides in the cytoplasm. The catalysed reaction is [protein]-peptidylproline (omega=180) = [protein]-peptidylproline (omega=0). Functionally, involved in protein export. Acts as a chaperone by maintaining the newly synthesized protein in an open conformation. Functions as a peptidyl-prolyl cis-trans isomerase. The polypeptide is Trigger factor (Thermobifida fusca (strain YX)).